Consider the following 969-residue polypeptide: Manganese resistance protein MNR2 (969 aa).

Residues 1–11 are compositionally biased toward basic and acidic residues; that stretch reads MSTDNSQKDEG. Disordered stretches follow at residues 1–49, 96–153, 167–186, and 199–256; these read MSTD…SRRP, GAFI…DLSP, HKSFVDENSPTDRRQSNANN, and VNNN…NNSS. At 1-912 the chain is on the cytoplasmic side; the sequence is MSTDNSQKDE…DMNDVLGKIT (912 aa). The segment covering 13-23 has biased composition (low complexity); that stretch reads PLLSPYSSSPQ. The span at 24 to 36 shows a compositional bias: basic residues; that stretch reads LRKKKRNQKRRKD. Residues 37–48 show a composition bias toward basic and acidic residues; that stretch reads KFVGHLKSDSRR. Phosphoserine is present on Ser-114. Residues 141–152 show a composition bias toward polar residues; sequence SDQNRSLVSDLS. Position 175 is a phosphoserine (Ser-175). Thr-177 is subject to Phosphothreonine. Ser-182 bears the Phosphoserine mark. Low complexity-rich tracts occupy residues 225-234 and 244-256; these read NKNSKSTSSD and SRPSSSLSSNNSS. Ser-383 carries the phosphoserine modification. Disordered regions lie at residues 559–662 and 746–769; these read VRRR…KPRE and QSDDSSDSDSSDSDSDSGASDEDA. Residues 565 to 578 are compositionally biased toward basic and acidic residues; sequence EKQESATLDHESIS. Thr-571 is modified (phosphothreonine). A phosphoserine mark is found at Ser-576 and Ser-582. Low complexity-rich tracts occupy residues 590-607 and 622-632; these read SNESNANNNNSTSNASRS and ANRTTNTSSSS. A compositionally biased stretch (acidic residues) spans 749 to 769; the sequence is DSSDSDSSDSDSDSGASDEDA. Residues 913–933 traverse the membrane as a helical segment; sequence ILGTIVLPMNVITGLWGMNVI. Over 934-941 the chain is Extracellular; that stretch reads VPGQYRDS. The helical transmembrane segment at 942–962 threads the bilayer; sequence LTWFIGIVLFMCMLACSAYMY. At 963–969 the chain is on the cytoplasmic side; the sequence is TKRRFGF.

Belongs to the CorA metal ion transporter (MIT) (TC 1.A.35) family.

Its subcellular location is the membrane. This chain is Manganese resistance protein MNR2 (MNR2), found in Saccharomyces cerevisiae (strain ATCC 204508 / S288c) (Baker's yeast).